A 224-amino-acid polypeptide reads, in one-letter code: Germin-like protein 1-2 (224 aa).

The N-terminal stretch at 1-29 is a signal peptide; it reads MASSRSVVLRVLVAVAVVAAAGAPRLAVA. The cysteines at positions 38 and 53 are disulfide-linked. Residues 67-215 form the Cupin type-1 domain; sequence DAIVQAPSTS…TFLMGEDEVG (149 aa). N-linked (GlcNAc...) asparagine glycosylation is present at Asn82. Mn(2+) is bound by residues His115, His117, Glu122, and His161. The N-linked (GlcNAc...) asparagine glycan is linked to Asn170.

This sequence belongs to the germin family. Oligomer (believed to be a pentamer but probably hexamer).

The protein resides in the secreted. Its subcellular location is the extracellular space. The protein localises to the apoplast. In terms of biological role, may play a role in plant defense. Probably has no oxalate oxidase activity even if the active site is conserved. This Oryza sativa subsp. japonica (Rice) protein is Germin-like protein 1-2.